Here is a 522-residue protein sequence, read N- to C-terminus: Putative cysteine ligase BshC (522 aa).

The stretch at 436-469 (SWAQAEKAKALKQLEDIEKKLRKAEERKHDDVIK) forms a coiled coil.

The protein belongs to the BshC family.

In Cytophaga hutchinsonii (strain ATCC 33406 / DSM 1761 / CIP 103989 / NBRC 15051 / NCIMB 9469 / D465), this protein is Putative cysteine ligase BshC.